Reading from the N-terminus, the 30-residue chain is uncharacterized protein (30 aa).

A signal peptide spans 1–22 (MRFLFFLPPSFITSFLYLALYS).

This is an uncharacterized protein from Schizosaccharomyces pombe (strain 972 / ATCC 24843) (Fission yeast).